Consider the following 503-residue polypeptide: GMP synthase [glutamine-hydrolyzing] (503 aa).

One can recognise a Glutamine amidotransferase type-1 domain in the interval 1–189; the sequence is MVLVLDFGSQ…FLELAGVKRD (189 aa). Catalysis depends on cysteine 78, which acts as the Nucleophile. Catalysis depends on residues histidine 164 and glutamate 166. One can recognise a GMPS ATP-PPase domain in the interval 190–378; the sequence is WTPEHVLEEL…LGLPDTLRLR (189 aa). 217 to 223 contacts ATP; the sequence is SGGVDSS.

As to quaternary structure, homodimer.

It catalyses the reaction XMP + L-glutamine + ATP + H2O = GMP + L-glutamate + AMP + diphosphate + 2 H(+). Its pathway is purine metabolism; GMP biosynthesis; GMP from XMP (L-Gln route): step 1/1. Its function is as follows. Catalyzes the synthesis of GMP from XMP. The polypeptide is GMP synthase [glutamine-hydrolyzing] (Thermus thermophilus (strain ATCC 27634 / DSM 579 / HB8)).